Reading from the N-terminus, the 458-residue chain is Zinc finger protein 239 (458 aa).

Residue Lys-108 forms a Glycyl lysine isopeptide (Lys-Gly) (interchain with G-Cter in SUMO2) linkage. Ser-191 bears the Phosphoserine mark. 9 consecutive C2H2-type zinc fingers follow at residues Tyr-207–His-229, Tyr-235–His-257, Tyr-263–His-285, Tyr-291–His-313, Tyr-319–His-341, Tyr-347–His-369, Tyr-375–His-397, Tyr-403–His-425, and Tyr-431–His-453.

This sequence belongs to the krueppel C2H2-type zinc-finger protein family.

Its subcellular location is the nucleus. Functionally, may be involved in transcriptional regulation. In Pongo abelii (Sumatran orangutan), this protein is Zinc finger protein 239 (ZNF239).